A 129-amino-acid polypeptide reads, in one-letter code: Type II secretion system protein I (129 aa).

Residues 1-6 (MKRARG) constitute a propeptide, leader sequence. Residue F7 is modified to N-methylphenylalanine. Residues 7-27 (FTLLEVLVALAIFAMVAASVL) form a helical membrane-spanning segment.

It belongs to the GSP I family. As to quaternary structure, type II secretion is composed of four main components: the outer membrane complex, the inner membrane complex, the cytoplasmic secretion ATPase and the periplasm-spanning pseudopilus. Forms the tip of the type II pseudopilus by interacting with XcpU, XcpW and XcpX. Interacts with core component XcpT. Post-translationally, cleaved by prepilin peptidase. Methylated by prepilin peptidase at the amino group of the N-terminal phenylalanine once the leader sequence is cleaved by prepilin peptidase.

It is found in the cell inner membrane. In terms of biological role, component of the type II secretion system required for the energy-dependent secretion of extracellular factors such as proteases and toxins from the periplasm. Part of the pseudopilus tip complex that is critical for the recognition and binding of secretion substrates. Type II pseudopilus confers increased bacterial adhesive capabilities. The polypeptide is Type II secretion system protein I (xcpV) (Pseudomonas aeruginosa (strain ATCC 15692 / DSM 22644 / CIP 104116 / JCM 14847 / LMG 12228 / 1C / PRS 101 / PAO1)).